We begin with the raw amino-acid sequence, 315 residues long: Olfactory receptor 5AN6 (315 aa).

The Extracellular segment spans residues 1–29 (MPGGRNSTVITKFILVGFSDFPKLKLVLF). The chain crosses the membrane as a helical span at residues 30 to 50 (VIFLGSYLSTVVWNLGLIILI). At 51 to 54 (RIDP) the chain is on the cytoplasmic side. Residues 55-75 (YLHTPMYFFLSNLSFLDFCYI) traverse the membrane as a helical segment. Residues 76–99 (SSTTPKMLSGFFQKSKSISFVGCT) lie on the Extracellular side of the membrane. Cysteine 98 and cysteine 180 are joined by a disulfide. A helical transmembrane segment spans residues 100-120 (MQYFIFSSLGLSECCLLAAMA). Topologically, residues 121–123 (YDR) are cytoplasmic. The helical transmembrane segment at 124–143 (YAAICNPLLYTAIMSPSLCV) threads the bilayer. Position 144 (histidine 144) is a topological domain, extracellular. A helical transmembrane segment spans residues 145-165 (MVVGAYSTGLLGSLIQLCAIL). Residues 166–202 (QLHFCGPNIINHFFCDLPQLLVLSCSETFPLQVLKFV) lie on the Cytoplasmic side of the membrane. The helical transmembrane segment at 203-223 (IAVIFGVASVIVILISYGYII) threads the bilayer. At 224–240 (GTILNISSVEGRSKAFN) the chain is on the extracellular side. A helical transmembrane segment spans residues 241–261 (TCASHLTAVTLFFGSGLFVYM). Over 262 to 272 (RPSSNSSQGYD) the chain is Cytoplasmic. A helical transmembrane segment spans residues 273–293 (KMASVFYTVVIPMLNPLIYSL). At 294-315 (RNKEIKDALQRCKNKCFSQCHC) the chain is on the extracellular side.

Belongs to the G-protein coupled receptor 1 family. In terms of tissue distribution, localized in the dorsomedial and ventral region of the olfactory bulb.

Its subcellular location is the cell membrane. In terms of biological role, odorant receptor specific for muscone. Muscone-binding causes a conformation change that triggers signaling via G(s)-class of G alpha protein GNAL, activating adenylyl cyclase. The sequence is that of Olfactory receptor 5AN6 from Mus musculus (Mouse).